The following is a 450-amino-acid chain: tRNA-2-methylthio-N(6)-dimethylallyladenosine synthase (450 aa).

An MTTase N-terminal domain is found at 7–127; the sequence is KRLYIKTYGC…LPELIARAHR (121 aa). Cys16, Cys52, Cys90, Cys165, Cys169, and Cys172 together coordinate [4Fe-4S] cluster. Positions 151–378 constitute a Radical SAM core domain; that stretch reads QVSGVSAFLT…NQLLDEQQKA (228 aa). Positions 381–443 constitute a TRAM domain; the sequence is ILQVGKTMPV…KMSLGGVLET (63 aa).

This sequence belongs to the methylthiotransferase family. MiaB subfamily. In terms of assembly, monomer. It depends on [4Fe-4S] cluster as a cofactor.

The protein localises to the cytoplasm. It carries out the reaction N(6)-dimethylallyladenosine(37) in tRNA + (sulfur carrier)-SH + AH2 + 2 S-adenosyl-L-methionine = 2-methylsulfanyl-N(6)-dimethylallyladenosine(37) in tRNA + (sulfur carrier)-H + 5'-deoxyadenosine + L-methionine + A + S-adenosyl-L-homocysteine + 2 H(+). Catalyzes the methylthiolation of N6-(dimethylallyl)adenosine (i(6)A), leading to the formation of 2-methylthio-N6-(dimethylallyl)adenosine (ms(2)i(6)A) at position 37 in tRNAs that read codons beginning with uridine. This chain is tRNA-2-methylthio-N(6)-dimethylallyladenosine synthase, found in Caulobacter sp. (strain K31).